The primary structure comprises 639 residues: MAU2 chromatid cohesion factor homolog (639 aa).

TPR repeat units follow at residues 453 to 486 (GGFY…ANAE) and 493 to 526 (SCSL…ASKI).

It belongs to the SCC4/mau-2 family. Interacts with Nipped-B to form the cohesin loading complex.

It is found in the nucleus. The protein localises to the nucleoplasm. Its function is as follows. Required for association of the cohesin complex with chromatin during interphase. Plays a role in sister chromatid cohesion and normal progression through prometaphase. This chain is MAU2 chromatid cohesion factor homolog, found in Drosophila ananassae (Fruit fly).